Consider the following 347-residue polypeptide: 4-hydroxy-2-oxovalerate aldolase (347 aa).

The 251-residue stretch at 2-252 (ILISDATLRD…DTRTTFEHVM (251 aa)) folds into the Pyruvate carboxyltransferase domain. 10–11 (RD) serves as a coordination point for substrate. D11 provides a ligand contact to Mn(2+). H14 (proton acceptor) is an active-site residue. The substrate site is built by S164 and H191. Mn(2+)-binding residues include H191 and H193.

The protein belongs to the 4-hydroxy-2-oxovalerate aldolase family.

It carries out the reaction (S)-4-hydroxy-2-oxopentanoate = acetaldehyde + pyruvate. In Burkholderia thailandensis (strain ATCC 700388 / DSM 13276 / CCUG 48851 / CIP 106301 / E264), this protein is 4-hydroxy-2-oxovalerate aldolase (mhpE).